A 367-amino-acid chain; its full sequence is Flagellar P-ring protein (367 aa).

An N-terminal signal peptide occupies residues 1 to 22 (MRRMLVIRWILAIHLIATQVFA).

This sequence belongs to the FlgI family. In terms of assembly, the basal body constitutes a major portion of the flagellar organelle and consists of four rings (L,P,S, and M) mounted on a central rod.

It localises to the periplasm. The protein resides in the bacterial flagellum basal body. Its function is as follows. Assembles around the rod to form the L-ring and probably protects the motor/basal body from shearing forces during rotation. This Legionella pneumophila (strain Lens) protein is Flagellar P-ring protein.